Consider the following 346-residue polypeptide: L-threonine dehydratase catabolic TdcB (346 aa).

Residue 59 to 60 (FT) coordinates AMP. The residue at position 64 (lysine 64) is an N6-(pyridoxal phosphate)lysine. Residues glutamine 94, 125–126 (GY), and asparagine 321 each bind AMP.

The protein belongs to the serine/threonine dehydratase family. As to quaternary structure, in the native structure, TdcB is in a dimeric form, whereas in the TdcB-AMP complex, it exists in a tetrameric form (dimer of dimers). Requires pyridoxal 5'-phosphate as cofactor.

It carries out the reaction L-threonine = 2-oxobutanoate + NH4(+). Its pathway is amino-acid degradation; L-threonine degradation via propanoate pathway; propanoate from L-threonine: step 1/4. Each protein molecule can bind up to four molecules of AMP, which act as an allosteric activator to the enzyme. In terms of biological role, catalyzes the anaerobic formation of alpha-ketobutyrate and ammonia from threonine in a two-step reaction. The first step involved a dehydration of threonine and a production of enamine intermediates (aminocrotonate), which tautomerizes to its imine form (iminobutyrate). Both intermediates are unstable and short-lived. The second step is the nonenzymatic hydrolysis of the enamine/imine intermediates to form 2-ketobutyrate and free ammonia. In the low water environment of the cell, the second step is accelerated by RidA. The chain is L-threonine dehydratase catabolic TdcB (tdcB) from Staphylococcus aureus (strain bovine RF122 / ET3-1).